Reading from the N-terminus, the 318-residue chain is MLHLIYISIIVVLIIILISYTRKPKYFRITAPRSVALFHGIHPLNPKNYKTFSKEFETILNNAIEDGDFKGQLTEPCSYALRGGKYIRPIILMEIVRACQLQHSFGAPIYPAEAALAVEYFHVASLIIDDMPSFDNDVKRRNKDTVWARFGVAKAQMSALALTMQGFQNICRQIDWIKEHCPRFPDPNQLGALLCTFVSHSLNSAGSGQLVDTPEKTIPFFKIAFIMGWVLGTGTIEDIGMIERAAHCFGHAFQLADDIKDHDTDTGWNYAKIHGKQKTFDDVAQSLQECKKILHGKKIFTSIWNEIFQKVINVALGT.

Residues 1–21 (MLHLIYISIIVVLIIILISYT) form a helical membrane-spanning segment. Lys-85, Arg-88, and His-122 together coordinate isopentenyl diphosphate. Mg(2+) contacts are provided by Asp-129 and Asp-135. Residue Arg-140 participates in dimethylallyl diphosphate binding. An isopentenyl diphosphate-binding site is contributed by Arg-141. Dimethylallyl diphosphate-binding residues include Lys-216, Thr-217, and Gln-254.

It belongs to the FPP/GGPP synthase family. Asfivirus trans-prenyltransferase subfamily. Mg(2+) is required as a cofactor.

Its subcellular location is the host endoplasmic reticulum. The protein resides in the host membrane. It catalyses the reaction isopentenyl diphosphate + dimethylallyl diphosphate = (2E)-geranyl diphosphate + diphosphate. The catalysed reaction is isopentenyl diphosphate + (2E)-geranyl diphosphate = (2E,6E)-farnesyl diphosphate + diphosphate. It carries out the reaction isopentenyl diphosphate + (2E,6E)-farnesyl diphosphate = (2E,6E,10E)-geranylgeranyl diphosphate + diphosphate. The enzyme catalyses isopentenyl diphosphate + (2E,6E,10E)-geranylgeranyl diphosphate = (2E,6E,10E,14E)-geranylfarnesyl diphosphate + diphosphate. It participates in isoprenoid biosynthesis; farnesyl diphosphate biosynthesis; farnesyl diphosphate from geranyl diphosphate and isopentenyl diphosphate: step 1/1. It functions in the pathway isoprenoid biosynthesis; geranyl diphosphate biosynthesis; geranyl diphosphate from dimethylallyl diphosphate and isopentenyl diphosphate: step 1/1. Its pathway is isoprenoid biosynthesis; geranylgeranyl diphosphate biosynthesis; geranylgeranyl diphosphate from farnesyl diphosphate and isopentenyl diphosphate: step 1/1. In terms of biological role, trans-prenyltransferase that catalyzes the sequential condensation of isopentenyl diphosphate (IPP) with different allylic diphosphates, such as dimethylallyl diphosphate (DMAPP), geranyl diphosphate (GPP), farnesyl diphosphate (FPP) and geranylgeranyl diphosphate (GGPP), farnesyl diphosphate being the best allylic substrate. The chain is Trans-prenyltransferase from African swine fever virus (strain Badajoz 1971 Vero-adapted) (Ba71V).